A 312-amino-acid chain; its full sequence is 2-phosphoglycerate kinase (312 aa).

One can recognise an ATP-cone domain in the interval 8–95 (SRILVTDKEY…LWRRVLKKHS (88 aa)).

The protein belongs to the 2-phosphoglycerate kinase family. It depends on a divalent metal cation as a cofactor.

It carries out the reaction (2R)-2-phosphoglycerate + ATP = (2R)-2,3-bisphosphoglycerate + ADP + H(+). The protein operates within thermoadapter biosynthesis; cyclic 2,3-diphosphoglycerate biosynthesis; cyclic 2,3-diphosphoglycerate from 2-phospho-D-glycerate: step 1/2. Catalyzes the phosphorylation of 2-phosphoglycerate to 2,3-diphosphoglycerate. Involved in the biosynthesis of cyclic 2,3-bisphosphoglycerate, a thermoprotectant. The polypeptide is 2-phosphoglycerate kinase (Methanococcus maripaludis (strain C7 / ATCC BAA-1331)).